An 837-amino-acid chain; its full sequence is Zinc fingers and homeoboxes protein 2 (837 aa).

The segment at 1–41 (MASKRKSTTPCMVRTSQVVEQDVPEEVDRAKEKGIGTPQPD) is disordered. Residues 27-77 (VDRAKEKGIGTPQPDVAKDCWAAELENSSKENEVIEVKSMGESQSKKLQGG) are interaction with EFNB1. Thr37 carries the post-translational modification Phosphothreonine. Residue Lys64 forms a Glycyl lysine isopeptide (Lys-Gly) (interchain with G-Cter in SUMO2) linkage. 2 C2H2-type zinc fingers span residues 78 to 101 (YECK…DMQH) and 110 to 133 (YVCA…SKFH). Positions 167–180 (TSGPGTGDSDSGIS) are enriched in low complexity. Positions 167–203 (TSGPGTGDSDSGISVSKTPIMKPGKPKADAKKVPKKP) are disordered. The segment covering 192–203 (PKADAKKVPKKP) has biased composition (basic and acidic residues). The segment at 195–358 (DAKKVPKKPE…PAQLAPTKVT (164 aa)) is required for homodimerization. 4 DNA-binding regions (homeobox) span residues 263–324 (NTTK…WSPE), 439–501 (TPAS…IVHI), 530–591 (PQKF…EQAV), and 628–690 (SPSP…TVKW). The tract at residues 263-446 (NTTKYNSALD…PLTPASDRKK (184 aa)) is required for repressor activity. A required for interaction with NFYA region spans residues 263–497 (NTTKYNSALD…SDHRYRCQRG (235 aa)). Residues 317-446 (HGISWSPEEV…PLTPASDRKK (130 aa)) are required for nuclear localization. The disordered stretch occupies residues 404-445 (GQKRPLVTPQAAPEPKRPHIAQVPEPPPKVANPPLTPASDRK). Residues 427–439 (PEPPPKVANPPLT) show a composition bias toward pro residues. Lys455 is covalently cross-linked (Glycyl lysine isopeptide (Lys-Gly) (interchain with G-Cter in SUMO2)). The disordered stretch occupies residues 754–837 (EPAKDCLPAK…DCVPAEAGQA (84 aa)). Residues Ser825 and Ser827 each carry the phosphoserine modification.

Belongs to the ZHX family. As to quaternary structure, homodimer (via homeobox domain 1). Heterodimer with ZHX1 (via homeobox domain 1). Heterodimer with ZHX3 (via homeobox domain 1). Heterodimerization with ZHX1 is not necessary for repressor activity. Interacts (via homeobox domain) with NFYA (via N-terminus). Interacts with EFNB1 intracellular domain peptide; the interaction enhances ZHX2 transcriptional repression activity.

The protein resides in the nucleus. Its function is as follows. Acts as a transcriptional repressor. Represses the promoter activity of the CDC25C gene stimulated by NFYA. May play a role in retinal development where it regulates the composition of bipolar cell populations, by promoting differentiation of bipolar OFF-type cells. In the brain, may promote maintenance and suppress differentiation of neural progenitor cells in the developing cortex. This Pongo abelii (Sumatran orangutan) protein is Zinc fingers and homeoboxes protein 2 (ZHX2).